We begin with the raw amino-acid sequence, 536 residues long: Putative beta-xylosidase (536 aa).

Catalysis depends on aspartate 14, which acts as the Proton acceptor. Glutamate 186 acts as the Proton donor in catalysis.

It belongs to the glycosyl hydrolase 43 family.

The enzyme catalyses Hydrolysis of (1-&gt;4)-beta-D-xylans, to remove successive D-xylose residues from the non-reducing termini.. The sequence is that of Putative beta-xylosidase (yagH) from Escherichia coli (strain K12).